The sequence spans 338 residues: Glycerol-3-phosphate dehydrogenase [NAD(P)+] (338 aa).

NADPH is bound by residues Ser-11, Trp-12, His-32, Arg-33, and Lys-106. Lys-106, Gly-137, and Ser-139 together coordinate sn-glycerol 3-phosphate. Residue Ala-141 coordinates NADPH. Sn-glycerol 3-phosphate contacts are provided by Lys-192, Asp-245, Ser-255, Arg-256, and Asn-257. The active-site Proton acceptor is the Lys-192. Arg-256 serves as a coordination point for NADPH. Residues Val-280 and Glu-282 each coordinate NADPH.

This sequence belongs to the NAD-dependent glycerol-3-phosphate dehydrogenase family.

Its subcellular location is the cytoplasm. The catalysed reaction is sn-glycerol 3-phosphate + NAD(+) = dihydroxyacetone phosphate + NADH + H(+). The enzyme catalyses sn-glycerol 3-phosphate + NADP(+) = dihydroxyacetone phosphate + NADPH + H(+). It functions in the pathway membrane lipid metabolism; glycerophospholipid metabolism. Its function is as follows. Catalyzes the reduction of the glycolytic intermediate dihydroxyacetone phosphate (DHAP) to sn-glycerol 3-phosphate (G3P), the key precursor for phospholipid synthesis. In Lysinibacillus sphaericus (strain C3-41), this protein is Glycerol-3-phosphate dehydrogenase [NAD(P)+].